The primary structure comprises 211 residues: Endonuclease III (211 aa).

Residues 111–130 (AHALESLPGVGHKTANVVLN) form the HhH domain. [4Fe-4S] cluster contacts are provided by Cys190, Cys197, Cys200, and Cys206.

This sequence belongs to the Nth/MutY family. [4Fe-4S] cluster serves as cofactor.

The catalysed reaction is 2'-deoxyribonucleotide-(2'-deoxyribose 5'-phosphate)-2'-deoxyribonucleotide-DNA = a 3'-end 2'-deoxyribonucleotide-(2,3-dehydro-2,3-deoxyribose 5'-phosphate)-DNA + a 5'-end 5'-phospho-2'-deoxyribonucleoside-DNA + H(+). In terms of biological role, DNA repair enzyme that has both DNA N-glycosylase activity and AP-lyase activity. The DNA N-glycosylase activity releases various damaged pyrimidines from DNA by cleaving the N-glycosidic bond, leaving an AP (apurinic/apyrimidinic) site. The AP-lyase activity cleaves the phosphodiester bond 3' to the AP site by a beta-elimination, leaving a 3'-terminal unsaturated sugar and a product with a terminal 5'-phosphate. This chain is Endonuclease III, found in Treponema pallidum (strain Nichols).